A 271-amino-acid polypeptide reads, in one-letter code: Chymotrypsin-like elastase family member 2A (271 aa).

An N-terminal signal peptide occupies residues 1 to 16 (MIRTLLLSALVAGALS). Residues 17–30 (CGYPTYEVEDDVSR) constitute a propeptide, activation peptide. The 239-residue stretch at 31 to 269 (VVGGQEATPN…YIDWINSVMA (239 aa)) folds into the Peptidase S1 domain. Cysteine 60 and cysteine 76 are joined by a disulfide. Catalysis depends on charge relay system residues histidine 75 and aspartate 123. Intrachain disulfides connect cysteine 157–cysteine 224, cysteine 188–cysteine 204, and cysteine 214–cysteine 245. Serine 218 acts as the Charge relay system in catalysis.

Belongs to the peptidase S1 family. Elastase subfamily. Interacts with CPA1. Interacts with SERPINA1. Highly expressed in pancreas (at mRNA and protein levels). Also expressed in adrenal gland and small intestine.

The protein resides in the secreted. The catalysed reaction is Preferential cleavage: Leu-|-Xaa, Met-|-Xaa and Phe-|-Xaa. Hydrolyzes elastin.. Functionally, elastase that enhances insulin signaling and might have a physiologic role in cellular glucose metabolism. Circulates in plasma and reduces platelet hyperactivation, triggers both insulin secretion and degradation, and increases insulin sensitivity. This Mus musculus (Mouse) protein is Chymotrypsin-like elastase family member 2A.